The sequence spans 267 residues: UDP-glucose:undecaprenyl-phosphate glucose-1-phosphate transferase (267 aa).

A helical membrane pass occupies residues 83-103 (VAAALLTALFAPLLLLAALAI).

This sequence belongs to the bacterial sugar transferase family.

The protein localises to the cell membrane. It carries out the reaction di-trans,octa-cis-undecaprenyl phosphate + UDP-alpha-D-glucose = alpha-D-glucosyl di-trans,octa-cis-undecaprenyl diphosphate + UMP. Its function is as follows. Is likely the initiating enzyme for holdfast polysaccharide synthesis. Catalyzes the transfer of the glucose-1-phosphate moiety from UDP-Glc onto the carrier lipid undecaprenyl phosphate (C55-P), forming a phosphoanhydride bond yielding to glucosyl-pyrophosphoryl-undecaprenol (Glc-PP-C55). Also possesses a weak galactose-1-P transferase activity. The polypeptide is UDP-glucose:undecaprenyl-phosphate glucose-1-phosphate transferase (pssY) (Caulobacter vibrioides (strain ATCC 19089 / CIP 103742 / CB 15) (Caulobacter crescentus)).